Consider the following 234-residue polypeptide: Thiamine import ATP-binding protein ThiQ (234 aa).

Positions 2–230 (LRFSDVKYRY…EKPPELTQYL (229 aa)) constitute an ABC transporter domain. Residue 32–39 (GPSGAGKS) coordinates ATP.

It belongs to the ABC transporter superfamily. Thiamine importer (TC 3.A.1.19.1) family. In terms of assembly, the complex is composed of two ATP-binding proteins (ThiQ), two transmembrane proteins (ThiP) and a solute-binding protein (ThiB).

The protein localises to the cell inner membrane. The enzyme catalyses thiamine(out) + ATP + H2O = thiamine(in) + ADP + phosphate + H(+). Functionally, part of the ABC transporter complex ThiBPQ involved in thiamine import. Responsible for energy coupling to the transport system. The polypeptide is Thiamine import ATP-binding protein ThiQ (Aliivibrio fischeri (strain ATCC 700601 / ES114) (Vibrio fischeri)).